Consider the following 1363-residue polypeptide: Zinc finger protein 541 (1363 aa).

2 disordered regions span residues 1–23 and 106–137; these read MEPY…SFSE and LGAL…SPQN. C2H2-type zinc fingers lie at residues 140–162, 168–190, and 196–221; these read LDCS…YLTH, HVCK…MLTH, and FVCI…EVQH. 4 disordered regions span residues 232–269, 286–387, 440–532, and 574–741; these read EEEA…GSVL, KIPS…GWPE, VASR…PGGL, and QVAT…GYRL. Positions 311-321 are enriched in polar residues; it reads SLGSSSCTPAS. The span at 335 to 345 shows a compositional bias: basic and acidic residues; sequence EETHPPRKEAA. Positions 453–465 are enriched in low complexity; the sequence is PSSTPTSVEPSPS. The segment covering 597 to 608 has biased composition (pro residues); it reads GPWPPQTLPPAP. Over residues 659–670 the composition is skewed to low complexity; the sequence is PPSLTGPGLLPS. Residues 838–860 form a C2H2-type 4 zinc finger; that stretch reads FVCKNCSQMFYTEKGLSSHMCFH. A disordered region spans residues 935 to 978; it reads QGQEKDGEERDSKESCQYRKRKKRPQPKALFAPPAPSALGEPGP. Over residues 937–951 the composition is skewed to basic and acidic residues; that stretch reads QEKDGEERDSKESCQ. The ELM2 domain occupies 1063 to 1155; sequence PHINVGSRFQ…VALETLLLRG (93 aa). The 52-residue stretch at 1170–1221 folds into the SANT domain; that stretch reads TGSDIWTPMEKRLFKKAFCAHKKDFYLIHKMIQTKSVAQCVEYYYIWKKMVK. The disordered stretch occupies residues 1243-1298; the sequence is RTEDKVTCSPRERPTHRPTPELKIKTKSYRRESILHSSPSAAPKRTPEPPGSVESQ. The span at 1244–1276 shows a compositional bias: basic and acidic residues; sequence TEDKVTCSPRERPTHRPTPELKIKTKSYRRESI. A C2H2-type 5 zinc finger spans residues 1301 to 1323; it reads FPCRECERVFDKIKSRNAHMKRH. The interval 1343-1363 is disordered; the sequence is LKEEEEEEEEELGADMGPLQW. Residues 1345–1355 are compositionally biased toward acidic residues; the sequence is EEEEEEEEELG.

As to quaternary structure, interacts with DNTTIP1. Identified in a complex with KCTD19, HDAC1 and HSPA2. Identified in a complex with HDAC1, HDAC2, DNTTIP1 and KCTD19. Identified in a complex with KCTD19 and HDAC1. Germ-cell-specific. Specifically present in testicular spermatogenic cells, but not in testicular and mature sperm. During spermatogenesis, it is present in spermatocytes and round spermatids only (at protein level).

It is found in the nucleus. Its function is as follows. Transcription regulator which is essential for male fertility and for the completion of meiotic prophase in spermatocytes. Regulates progression of the pachytene stage of meiotic prophase by activating the expression of genes involved in meiosis and post-meiosis during spermatogenesis. Maintains the repression of pre-pachytene transcriptional programs, including meiotic double-strand breaks (DSB) formation genes in pachytene spermatocytes and suppresses aberrant DSB formation after mid-pachytene, thus ensuring meiosis progression. The polypeptide is Zinc finger protein 541 (Znf541) (Mus musculus (Mouse)).